The sequence spans 124 residues: Phosphoribosyl-ATP pyrophosphatase (124 aa).

The protein belongs to the PRA-PH family.

Its subcellular location is the cytoplasm. It catalyses the reaction 1-(5-phospho-beta-D-ribosyl)-ATP + H2O = 1-(5-phospho-beta-D-ribosyl)-5'-AMP + diphosphate + H(+). The protein operates within amino-acid biosynthesis; L-histidine biosynthesis; L-histidine from 5-phospho-alpha-D-ribose 1-diphosphate: step 2/9. The chain is Phosphoribosyl-ATP pyrophosphatase from Ralstonia pickettii (strain 12J).